The following is a 279-amino-acid chain: MTELTRIPLAGVIGSPIAHSRSPALHGYWLKRYGLKGHYIPMDVAQADLRDVLAAMPRMGFVGCNVTIPHKESVIGLADIVTDRAALIGAANTLIFGKDGKIHADNTDGTGFTANLRQNAPAWQPQSGPAVVWGAGGAARAVIAALIEVGVPEIRLANRSRARADALRSDFGAKVHVHDWVQAGNILEDAMTVVNTTSLGMVGKPEFRVPLDALNPKAVVTDLVYAPLRTRLLVEAEAAGCRTVDGLGMLLHQAAPGFERWFGVRPEVDEETRAAVLAT.

Residues 20 to 22 (SRS) and Thr-67 contribute to the shikimate site. Lys-71 serves as the catalytic Proton acceptor. Asp-83 contacts NADP(+). Residues Asn-92 and Asp-108 each coordinate shikimate. Residues 134-138 (GAGGA) and Leu-223 each bind NADP(+). Position 225 (Tyr-225) interacts with shikimate. An NADP(+)-binding site is contributed by Gly-246.

It belongs to the shikimate dehydrogenase family. In terms of assembly, homodimer.

It catalyses the reaction shikimate + NADP(+) = 3-dehydroshikimate + NADPH + H(+). It participates in metabolic intermediate biosynthesis; chorismate biosynthesis; chorismate from D-erythrose 4-phosphate and phosphoenolpyruvate: step 4/7. Functionally, involved in the biosynthesis of the chorismate, which leads to the biosynthesis of aromatic amino acids. Catalyzes the reversible NADPH linked reduction of 3-dehydroshikimate (DHSA) to yield shikimate (SA). In Cereibacter sphaeroides (strain ATCC 17023 / DSM 158 / JCM 6121 / CCUG 31486 / LMG 2827 / NBRC 12203 / NCIMB 8253 / ATH 2.4.1.) (Rhodobacter sphaeroides), this protein is Shikimate dehydrogenase (NADP(+)).